The chain runs to 214 residues: Probable nicotinate-nucleotide adenylyltransferase (214 aa).

It belongs to the NadD family.

It carries out the reaction nicotinate beta-D-ribonucleotide + ATP + H(+) = deamido-NAD(+) + diphosphate. Its pathway is cofactor biosynthesis; NAD(+) biosynthesis; deamido-NAD(+) from nicotinate D-ribonucleotide: step 1/1. In terms of biological role, catalyzes the reversible adenylation of nicotinate mononucleotide (NaMN) to nicotinic acid adenine dinucleotide (NaAD). This is Probable nicotinate-nucleotide adenylyltransferase from Thermomicrobium roseum (strain ATCC 27502 / DSM 5159 / P-2).